A 440-amino-acid polypeptide reads, in one-letter code: Chromosome partition protein MukF (440 aa).

The leucine-zipper stretch occupies residues 208–236 (LSETSGTLRELQDTLEAAGDKLQANLLRI).

This sequence belongs to the MukF family. Interacts, and probably forms a ternary complex, with MukE and MukB via its C-terminal region. The complex formation is stimulated by calcium or magnesium. It is required for an interaction between MukE and MukB.

The protein localises to the cytoplasm. It localises to the nucleoid. In terms of biological role, involved in chromosome condensation, segregation and cell cycle progression. May participate in facilitating chromosome segregation by condensation DNA from both sides of a centrally located replisome during cell division. Not required for mini-F plasmid partitioning. Probably acts via its interaction with MukB and MukE. Overexpression results in anucleate cells. It has a calcium binding activity. This chain is Chromosome partition protein MukF, found in Yersinia pestis.